A 716-amino-acid chain; its full sequence is Leucine-rich repeat neuronal protein 1 (716 aa).

A signal peptide spans 1–25 (MARMSFVIAACQLVLGLLMTSLTES). In terms of domain architecture, LRRNT spans 26–72 (SIQNSECPQLCVCEIRPWFTPQSTYREATTVDCNDLRLTRIPSNLSS). The Extracellular segment spans residues 26 to 631 (SIQNSECPQL…DISDQETSTA (606 aa)). 11 LRR repeats span residues 73–95 (DTQV…QQLF), 96–117 (NLTE…GLAN), 120–141 (QLTT…CLQD), 144–165 (NLQE…AFAG), 168–189 (NLLR…WFDS), 192–213 (NLEI…NFKP), 216–237 (NLRS…ALVG), 240–261 (SLES…ALQK), 264–285 (NLKF…DFKN), 313–335 (ELTK…AFRS), and 338–359 (ALES…TVES). Residues N96 and N117 are each glycosylated (N-linked (GlcNAc...) asparagine). The 54-residue stretch at 371–424 (NPLRCDCVIHWINSNKTNIRFMEPLSMFCAMPPEYKGHQVKEVLIQDSSEQCLP) folds into the LRRCT domain. N385 is a glycosylation site (N-linked (GlcNAc...) asparagine). One can recognise an Ig-like C2-type domain in the interval 424–515 (PMISHDSFPN…GADTRVATIK (92 aa)). C447 and C499 form a disulfide bridge. An N-linked (GlcNAc...) asparagine glycan is attached at N517. The Fibronectin type-III domain occupies 525–617 (QVLKIYVKQT…SCVNVTTKNA (93 aa)). Residues 632–652 (LAAVMGSMFAVISLASIAVYF) form a helical membrane-spanning segment. At 653-716 (AKRFKRKNYH…VDTSRSYYMW (64 aa)) the chain is on the cytoplasmic side. Positions 691–700 (DSEKDKDGSA) are enriched in basic and acidic residues. A disordered region spans residues 691–716 (DSEKDKDGSADTKPTQVDTSRSYYMW). Positions 702–716 (TKPTQVDTSRSYYMW) are enriched in polar residues.

It is found in the membrane. The protein is Leucine-rich repeat neuronal protein 1 (LRRN1) of Homo sapiens (Human).